The following is a 415-amino-acid chain: Multidrug resistance protein MdtA (415 aa).

The signal sequence occupies residues 1–21; sequence MKGSYKSRWVIVIVVVIAAIA. 2 disordered regions span residues 32–60 and 392–415; these read SRSA…GPLA and EAQS…GARS. Basic and acidic residues predominate over residues 399–415; it reads PEEKATSREYAKKGARS.

Belongs to the membrane fusion protein (MFP) (TC 8.A.1) family. Part of a tripartite efflux system composed of MdtA, MdtB and MdtC.

The protein localises to the cell inner membrane. Its function is as follows. The MdtABC tripartite complex confers resistance against novobiocin and deoxycholate. This is Multidrug resistance protein MdtA from Escherichia coli (strain K12 / MC4100 / BW2952).